The primary structure comprises 627 residues: Probable inactive L-type lectin-domain containing receptor kinase III.1 (627 aa).

An N-terminal signal peptide occupies residues 1–23 (MITFKSIALTIIFLSYFVSCVSS). At 24-303 (QRETKFLNHG…STEKKSNNTM (280 aa)) the chain is on the extracellular side. A legume-lectin like region spans residues 26–262 (ETKFLNHGFL…SHFVLGWSFN (237 aa)). N-linked (GlcNAc...) asparagine glycosylation is found at Asn-57, Asn-78, Asn-127, Asn-184, Asn-202, Asn-209, and Asn-230. The tract at residues 272-297 (ITKLPSLPDPPPTLSPSPSPPVSTEK) is disordered. Residues 278-292 (LPDPPPTLSPSPSPP) show a composition bias toward pro residues. The N-linked (GlcNAc...) asparagine glycan is linked to Asn-300. The chain crosses the membrane as a helical span at residues 304–324 (LIIIVAASATVALMILIFSGF). Topologically, residues 325–627 (WFLRRDKIFF…PHDDYLFYGV (303 aa)) are cytoplasmic. The Protein kinase domain maps to 353-623 (FDNSKLLGER…TEALPHDDYL (271 aa)). ATP-binding positions include 359–367 (LGERNSGSF) and Lys-381.

This sequence in the C-terminal section; belongs to the protein kinase superfamily. Ser/Thr protein kinase family. The protein in the N-terminal section; belongs to the leguminous lectin family.

The protein localises to the cell membrane. This Arabidopsis thaliana (Mouse-ear cress) protein is Probable inactive L-type lectin-domain containing receptor kinase III.1 (LECRK31).